The following is a 204-amino-acid chain: UPF0228 protein MA_0511 (204 aa).

It belongs to the UPF0228 family.

In Methanosarcina acetivorans (strain ATCC 35395 / DSM 2834 / JCM 12185 / C2A), this protein is UPF0228 protein MA_0511.